A 1010-amino-acid chain; its full sequence is ATP-dependent DNA/RNA helicase DHX36 (1010 aa).

Positions 1 to 54 (MSYDYHQNWGRDGGPRSSGGGYGGSYGGSHGGGHGGNRGSGGGGGGGGGRGGRG) are required for recruitment to cytoplasmic stress granules. Residues 1–63 (MSYDYHQNWG…GRHPGHLKGR (63 aa)) form a disordered region. The segment at 1 to 107 (MSYDYHQNWG…IVQLLHSVQT (107 aa)) is required for the pre-miR-134 transport. The tract at residues 1-202 (MSYDYHQNWG…KKTDLRYIEM (202 aa)) is necessary for nuclear and nucleolar caps localizations. The segment covering 16–51 (RSSGGGYGGSYGGSHGGGHGGNRGSGGGGGGGGGRG) has biased composition (gly residues). The interval 56–78 (HPGHLKGREIGLWYAKKQGQKNK) is DSM (DHX36-specific motif). The tract at residues 56–108 (HPGHLKGREIGLWYAKKQGQKNKEAERQERAVVHMDERREEQIVQLLHSVQTK) is required for G4-DNA- and G4-RNA-binding. RecA-like domain regions lie at residues 109–388 (NDKD…MIHI) and 389–630 (PGFT…DYQL). The Helicase ATP-binding domain occupies 219 to 389 (VNMIDNHQVT…FGNCPMIHIP (171 aa)). 235–240 (GCGKTT) provides a ligand contact to ATP. Residues 267-319 (RRISAISVAERVAAERAESCGNGNSTGYQIRLQSRLPRKQGSILYCTTGIILQ) are necessary for interaction with single-stranded DNA at the 3'-end of the G4-DNA structure. The DEAH box motif lies at 336-339 (DEIH). Glu-337 and His-339 together coordinate Mg(2+). Residues 479 to 649 (ALIRYIVLEE…ELCLQIKILR (171 aa)) form the Helicase C-terminal domain. Residues 500 to 559 (WDNISTLHDLLMSQVMFKSDKFIIIPLHSLMPTVNQTQVFKRTPPGVRKIVIATNIAETS) form a necessary for interaction with single-stranded DNA at the 3'-end of the G4-DNA structure region. Positions 519–530 (DKFIIIPLHSLM) match the Nuclear localization signal motif. Residues Ser-559 and 604–607 (RAGR) contribute to the ATP site. Positions 631–700 (PEILRTPLEE…LGVHLARLPV (70 aa)) are WH domain. 3 necessary for interaction with single-stranded DNA at the 3'-end of the G4-DNA structure regions span residues 640-699 (ELCL…ARLP), 851-862 (NLGKKRKMVKVY), and 872-902 (HPKSVNVEQTEFNYNWLIYHLKMRTSSIYLY). The segment at 843-907 (PKVAKIRLNL…SIYLYDCTEV (65 aa)) is OB-fold-like subdomains. Lys-949 is modified (N6-acetyllysine). Ser-965 carries the phosphoserine modification.

In terms of assembly, found in a multi-helicase-TICAM1 complex at least composed of DHX36, DDX1, DDX21 and TICAM1; this complex exists in resting cells with or without dsRNA poly(I:C) ligand stimulation. Interacts (via C-terminus) with TICAM1 (via TIR domain). Interacts (via C-terminus) with DDX21; this interaction serves as bridges to TICAM1. Interacts with TERT; this interaction is dependent on the ability of DHX36 to bind to the G-quadruplex RNA (G4-RNA) structure present in the telomerase RNA template component (TERC). Interacts with DKC1; this interaction is dependent on the ability of DHX36 to bind to the G4-RNA structure present in TERC. Interacts with PARN; this interaction stimulates PARN to enhance uPA mRNA decay. Interacts with EXOSC3; this interaction occurs in a RNase-insensitive manner. Interacts with EXOSC10; this interaction occurs in a RNase-insensitive manner. Interacts with ILF3; this interaction occurs in a RNA-dependent manner. Interacts with ELAVL1; this interaction occurs in an RNA-dependent manner. Interacts with DDX5; this interaction occurs in a RNA-dependent manner. Interacts with DDX17; this interaction occurs in a RNA-dependent manner. Interacts with HDAC1; this interaction occurs in a RNA-dependent manner. Interacts with HDAC3; this interaction occurs in a RNA-dependent manner. Interacts with HDAC4. Interacts with AGO1. Interacts with AGO2. Interacts with ERCC6. It depends on Mg(2+) as a cofactor.

The protein resides in the nucleus. Its subcellular location is the cytoplasm. It localises to the cytosol. The protein localises to the stress granule. It is found in the nucleus speckle. The protein resides in the chromosome. Its subcellular location is the telomere. It localises to the mitochondrion. The protein localises to the perikaryon. It is found in the cell projection. The protein resides in the dendrite. Its subcellular location is the axon. The enzyme catalyses ATP + H2O = ADP + phosphate + H(+). ATPase activity is enhanced in the presence of homomeric poly(U) RNAs, but not by double-stranded DNA (dsDNA), double-stranded RNA (dsRNA) and tRNA. Functionally, multifunctional ATP-dependent helicase that unwinds G-quadruplex (G4) structures. Plays a role in many biological processes such as genomic integrity, gene expression regulations and as a sensor to initiate antiviral responses. G4 structures correspond to helical structures containing guanine tetrads. Binds with high affinity to and unwinds G4 structures that are formed in nucleic acids (G4-DNA and G4-RNA). Plays a role in genomic integrity. Converts the G4-RNA structure present in telomerase RNA template component (TREC) into a double-stranded RNA to promote P1 helix formation that acts as a template boundary ensuring accurate reverse transcription. Plays a role in transcriptional regulation. Resolves G4-DNA structures in promoters of genes, such as YY1, KIT/c-kit and ALPL and positively regulates their expression. Plays a role in post-transcriptional regulation. Unwinds a G4-RNA structure located in the 3'-UTR polyadenylation site of the pre-mRNA TP53 and stimulates TP53 pre-mRNA 3'-end processing in response to ultraviolet (UV)-induced DNA damage. Binds to the precursor-microRNA-134 (pre-miR-134) terminal loop and regulates its transport into the synapto-dendritic compartment. Involved in the pre-miR-134-dependent inhibition of target gene expression and the control of dendritic spine size. Plays a role in the regulation of cytoplasmic mRNA translation and mRNA stability. Binds to both G4-RNA structures and alternative non-quadruplex-forming sequence within the 3'-UTR of the PITX1 mRNA regulating negatively PITX1 protein expression. Binds to both G4-RNA structure in the 5'-UTR and AU-rich elements (AREs) localized in the 3'-UTR of NKX2-5 mRNA to either stimulate protein translation or induce mRNA decay in an ELAVL1-dependent manner, respectively. Also binds to ARE sequences present in several mRNAs mediating exosome-mediated 3'-5' mRNA degradation. Involved in cytoplasmic urokinase-type plasminogen activator (uPA) mRNA decay. Component of a multi-helicase-TICAM1 complex that acts as a cytoplasmic sensor of viral double-stranded RNA (dsRNA) and plays a role in the activation of a cascade of antiviral responses including the induction of pro-inflammatory cytokines via the adapter molecule TICAM1. Required for the early embryonic development and hematopoiesis. Involved in the regulation of cardioblast differentiation and proliferation during heart development. Involved in spermatogonia differentiation. May play a role in ossification. The chain is ATP-dependent DNA/RNA helicase DHX36 from Bos taurus (Bovine).